Consider the following 430-residue polypeptide: Probable beta-1,3-galactosyl-O-glycosyl-glycoprotein beta-1,6-N-acetylglucosaminyltransferase 7 (430 aa).

The Cytoplasmic segment spans residues 1 to 8 (MSQLRATK). Residues 9–25 (SGLVVRAVICIFIFLYL) form a helical; Signal-anchor for type II membrane protein membrane-spanning segment. At 26–430 (RNPTPAESEE…QSHFNMRLNR (405 aa)) the chain is on the extracellular side. 4 disulfide bridges follow: C53–C205, C139–C354, C160–C187, and C363–C395. N-linked (GlcNAc...) asparagine glycosylation occurs at N87. Residue N272 is glycosylated (N-linked (GlcNAc...) asparagine).

Belongs to the glycosyltransferase 14 family.

The protein resides in the golgi apparatus membrane. It functions in the pathway protein modification; protein glycosylation. In terms of biological role, probable glycosyltransferase. This is Probable beta-1,3-galactosyl-O-glycosyl-glycoprotein beta-1,6-N-acetylglucosaminyltransferase 7 from Homo sapiens (Human).